A 304-amino-acid polypeptide reads, in one-letter code: Elongation factor Ts (304 aa).

Residues 82–85 (TDFV) are involved in Mg(2+) ion dislocation from EF-Tu.

Belongs to the EF-Ts family.

The protein resides in the cytoplasm. Functionally, associates with the EF-Tu.GDP complex and induces the exchange of GDP to GTP. It remains bound to the aminoacyl-tRNA.EF-Tu.GTP complex up to the GTP hydrolysis stage on the ribosome. This chain is Elongation factor Ts, found in Symbiobacterium thermophilum (strain DSM 24528 / JCM 14929 / IAM 14863 / T).